The sequence spans 487 residues: Kynureninase 1 (487 aa).

Pyridoxal 5'-phosphate is bound by residues Leu147, Thr148, 175–178 (FPSD), Ser232, Asp261, His264, and Tyr286. The residue at position 287 (Lys287) is an N6-(pyridoxal phosphate)lysine. The pyridoxal 5'-phosphate site is built by Trp327 and Asn355.

This sequence belongs to the kynureninase family. As to quaternary structure, homodimer. The cofactor is pyridoxal 5'-phosphate.

It is found in the cytoplasm. The enzyme catalyses L-kynurenine + H2O = anthranilate + L-alanine + H(+). It catalyses the reaction 3-hydroxy-L-kynurenine + H2O = 3-hydroxyanthranilate + L-alanine + H(+). It participates in amino-acid degradation; L-kynurenine degradation; L-alanine and anthranilate from L-kynurenine: step 1/1. It functions in the pathway cofactor biosynthesis; NAD(+) biosynthesis; quinolinate from L-kynurenine: step 2/3. Catalyzes the cleavage of L-kynurenine (L-Kyn) and L-3-hydroxykynurenine (L-3OHKyn) into anthranilic acid (AA) and 3-hydroxyanthranilic acid (3-OHAA), respectively. This is Kynureninase 1 (bna5-1) from Aspergillus oryzae (strain ATCC 42149 / RIB 40) (Yellow koji mold).